A 192-amino-acid chain; its full sequence is Large ribosomal subunit protein uL5 (192 aa).

Belongs to the universal ribosomal protein uL5 family. As to quaternary structure, part of the 50S ribosomal subunit; part of the 5S rRNA/L5/L18/L25 subcomplex. Contacts the 5S rRNA and the P site tRNA. Forms a bridge to the 30S subunit in the 70S ribosome.

In terms of biological role, this is one of the proteins that bind and probably mediate the attachment of the 5S RNA into the large ribosomal subunit, where it forms part of the central protuberance. In the 70S ribosome it contacts protein S13 of the 30S subunit (bridge B1b), connecting the 2 subunits; this bridge is implicated in subunit movement. Contacts the P site tRNA; the 5S rRNA and some of its associated proteins might help stabilize positioning of ribosome-bound tRNAs. The polypeptide is Large ribosomal subunit protein uL5 (Paenarthrobacter aurescens (strain TC1)).